A 266-amino-acid chain; its full sequence is Norfluorocurarine synthase 2 (266 aa).

The 111-residue stretch at 11-121 (HFVLVHGAGH…VMPDSTHPPN (111 aa)) folds into the AB hydrolase-1 domain. Catalysis depends on residues serine 86, aspartate 216, and histidine 244.

It belongs to the AB hydrolase superfamily. In terms of assembly, homodimer.

The enzyme catalyses 17-dehydropreakuammicine + H2O = norfluorocurarine + methanol + CO2. It functions in the pathway alkaloid biosynthesis. Functionally, hydrolase involved in the biosynthesis of curare monoterpene indole alkaloids (MIAs), natural products such as diaboline, a pharmacologically active compound used to regulate blood pressure. Curare alkaloids act as animal glycine receptor antagonists. Catalyzes the conversion of dehydropreakuammicine to norfluorocurarine. This Strychnos sp protein is Norfluorocurarine synthase 2.